The following is a 233-amino-acid chain: 3-dehydroquinate dehydratase (233 aa).

Residues 34 to 36 (ELR) and R64 each bind 3-dehydroquinate. H118 acts as the Proton donor/acceptor in catalysis. The Schiff-base intermediate with substrate role is filled by K145. R185, S205, and Q209 together coordinate 3-dehydroquinate.

This sequence belongs to the type-I 3-dehydroquinase family. As to quaternary structure, homodimer.

It carries out the reaction 3-dehydroquinate = 3-dehydroshikimate + H2O. The protein operates within metabolic intermediate biosynthesis; chorismate biosynthesis; chorismate from D-erythrose 4-phosphate and phosphoenolpyruvate: step 3/7. In terms of biological role, involved in the third step of the chorismate pathway, which leads to the biosynthesis of aromatic amino acids. Catalyzes the cis-dehydration of 3-dehydroquinate (DHQ) and introduces the first double bond of the aromatic ring to yield 3-dehydroshikimate. The protein is 3-dehydroquinate dehydratase of Coxiella burnetii (strain CbuK_Q154) (Coxiella burnetii (strain Q154)).